The following is a 425-amino-acid chain: MNYSRFLTATSLARKPSPIRTTADILSKAPKTLISLAPGSPNPSMFPFKSAAFTVENGSTIRFEDDLIKRALQYSPSYGIPELLSWLKQFQVKLHNPPTVNYPPNQGQMDLCITSGCQDGLCKAFEMLINPGDTILVNEPLFPGTLYAMKPLGCNIINVPSDEHGIIPEGLKKILSQWKPEDSKDPTKKTPKFLYTVPNGNNPTGNSLTGDRKKEIYELARKYDFLIIEDDPYYFLQFSKPWEPTFLSMDVDGRVIRADTFSKTVSSGLRVGFMTGPKTLIQNIVLHTQVSSVHACTLSQLMILQLLHQWGEEGFLAHIDRTIDFYKNQRDSILAAADKWLRGLAEWHVPKAGMFLWIKVKGISDTKQLIEEKAIEREVLLVPGNGFFIDGSAPTSFFRASFSLATPAQMDTAFQRLAQLIKESL.

A mitochondrion-targeting transit peptide spans 1–29 (MNYSRFLTATSLARKPSPIRTTADILSKA). Substrate is bound at residue arginine 20. Position 40 is a phosphoserine (serine 40). Lysine 69 is modified (N6-acetyllysine). A substrate-binding site is contributed by tyrosine 74. Lysine 172 is modified (N6-succinyllysine). Lysine 179 carries the N6-acetyllysine modification. Asparagine 202 serves as a coordination point for substrate. At lysine 263 the chain carries N6-(pyridoxal phosphate)lysine; alternate. N6-acetyllysine; alternate occurs at positions 263 and 339. An N6-succinyllysine; alternate mark is found at lysine 263 and lysine 339. Position 351 is an N6-acetyllysine (lysine 351). Lysine 367 carries the N6-acetyllysine; alternate modification. Lysine 367 bears the N6-succinyllysine; alternate mark. Arginine 399 contacts substrate. Lysine 422 is subject to N6-acetyllysine.

It belongs to the class-I pyridoxal-phosphate-dependent aminotransferase family. In terms of assembly, homodimer. It depends on pyridoxal 5'-phosphate as a cofactor. Expressed mainly in kidney and to a lesser amount in liver and brain.

The protein resides in the mitochondrion. It catalyses the reaction L-kynurenine + 2-oxoglutarate = kynurenate + L-glutamate + H2O. It carries out the reaction L-2-aminoadipate + 2-oxoglutarate = 2-oxoadipate + L-glutamate. The enzyme catalyses glycine + 2-oxoglutarate = glyoxylate + L-glutamate. The catalysed reaction is L-kynurenine + glyoxylate = kynurenate + glycine + H2O. It catalyses the reaction 3-hydroxy-L-kynurenine + glyoxylate = xanthurenate + glycine + H2O. It carries out the reaction 2-oxohexanoate + L-kynurenine = L-2-aminohexanoate + kynurenate + H2O. The enzyme catalyses 3-phenylpyruvate + L-kynurenine = kynurenate + L-phenylalanine + H2O. The catalysed reaction is 4-methylsulfanyl-2-oxobutanoate + L-kynurenine = kynurenate + L-methionine + H2O. It catalyses the reaction 2-oxo-3-sulfanylpropanoate + L-kynurenine = kynurenate + L-cysteine + H2O. It carries out the reaction indole-3-pyruvate + L-kynurenine = kynurenate + L-tryptophan + H2O. The enzyme catalyses 2-oxopentanoate + L-kynurenine = L-2-aminopentanoate + kynurenate + H2O. The catalysed reaction is 4-methyl-2-oxopentanoate + L-kynurenine = kynurenate + L-leucine + H2O. It catalyses the reaction glyoxylate + L-methionine = 4-methylsulfanyl-2-oxobutanoate + glycine. It carries out the reaction L-2-aminoadipate + glyoxylate = 2-oxoadipate + glycine. The enzyme catalyses L-tyrosine + glyoxylate = 3-(4-hydroxyphenyl)pyruvate + glycine. The catalysed reaction is glyoxylate + L-phenylalanine = 3-phenylpyruvate + glycine. It catalyses the reaction L-tryptophan + glyoxylate = indole-3-pyruvate + glycine. It carries out the reaction L-leucine + glyoxylate = 4-methyl-2-oxopentanoate + glycine. The enzyme catalyses 2-oxobutanoate + L-kynurenine = (2S)-2-aminobutanoate + kynurenate + H2O. The catalysed reaction is 2-oxoadipate + L-kynurenine = L-2-aminoadipate + kynurenate + H2O. It participates in amino-acid degradation; L-lysine degradation via saccharopine pathway; glutaryl-CoA from L-lysine: step 4/6. In terms of biological role, transaminase with broad substrate specificity. Has transaminase activity towards aminoadipate, kynurenine, methionine and glutamate. Shows activity also towards tryptophan, aspartate and hydroxykynurenine. Accepts a variety of oxo-acids as amino-group acceptors, with a preference for 2-oxoglutarate, 2-oxocaproic acid, phenylpyruvate and alpha-oxo-gamma-methiol butyric acid. Can also use glyoxylate as amino-group acceptor (in vitro). The polypeptide is Kynurenine/alpha-aminoadipate aminotransferase, mitochondrial (Mus musculus (Mouse)).